A 312-amino-acid polypeptide reads, in one-letter code: DNA-directed RNA polymerase subunit alpha (312 aa).

The interval 1 to 229 (MLQYQIDRVD…ALFQPLATVT (229 aa)) is alpha N-terminal domain (alpha-NTD). The interval 241–312 (SAESQIPLEE…ISLPQSRTTA (72 aa)) is alpha C-terminal domain (alpha-CTD).

The protein belongs to the RNA polymerase alpha chain family. As to quaternary structure, in cyanobacteria the RNAP catalytic core is composed of 2 alpha, 1 beta, 1 beta', 1 gamma and 1 omega subunit. When a sigma factor is associated with the core the holoenzyme is formed, which can initiate transcription.

The enzyme catalyses RNA(n) + a ribonucleoside 5'-triphosphate = RNA(n+1) + diphosphate. Functionally, DNA-dependent RNA polymerase catalyzes the transcription of DNA into RNA using the four ribonucleoside triphosphates as substrates. This chain is DNA-directed RNA polymerase subunit alpha, found in Synechococcus sp. (strain RCC307).